A 417-amino-acid polypeptide reads, in one-letter code: Gamma-glutamyl phosphate reductase (417 aa).

Belongs to the gamma-glutamyl phosphate reductase family.

It localises to the cytoplasm. The enzyme catalyses L-glutamate 5-semialdehyde + phosphate + NADP(+) = L-glutamyl 5-phosphate + NADPH + H(+). Its pathway is amino-acid biosynthesis; L-proline biosynthesis; L-glutamate 5-semialdehyde from L-glutamate: step 2/2. In terms of biological role, catalyzes the NADPH-dependent reduction of L-glutamate 5-phosphate into L-glutamate 5-semialdehyde and phosphate. The product spontaneously undergoes cyclization to form 1-pyrroline-5-carboxylate. The polypeptide is Gamma-glutamyl phosphate reductase (Polynucleobacter asymbioticus (strain DSM 18221 / CIP 109841 / QLW-P1DMWA-1) (Polynucleobacter necessarius subsp. asymbioticus)).